Reading from the N-terminus, the 798-residue chain is Neuroligin-1 (798 aa).

The signal sequence occupies residues 1-17; the sequence is MERIYLLLLLFLPRIRS. Over 18–685 the chain is Extracellular; the sequence is YDVRSVTTSW…AAGSFTGKAL (668 aa). Residues Cys86 and Cys125 are joined by a disulfide bond. Asn164, Asn292, and Asn315 each carry an N-linked (GlcNAc...) asparagine glycan. The cysteines at positions 288 and 307 are disulfide-linked. Residues 636–676 are disordered; sequence ANLPFPPPPMPPSPPPELTTKPKPSESPTTLQTTTESEKAA. Residues 639–652 are compositionally biased toward pro residues; sequence PFPPPPMPPSPPPE. Residues 653 to 665 are compositionally biased toward low complexity; that stretch reads LTTKPKPSESPTT. The chain crosses the membrane as a helical span at residues 686 to 706; it reads GGVIFIGCGFLIMNVCLLIAV. The Cytoplasmic portion of the chain corresponds to 707 to 798; sequence RREWGKKRRN…QAPTLEEIQV (92 aa). Positions 731–765 are disordered; that stretch reads HGGGAEQYNSLNSPEPLLSASHKNSTSMRPAGISP.

It belongs to the type-B carboxylesterase/lipase family. Interacts (via extracellular domain) with isoform b of madd-4; the interaction is required for the localization to postsynaptic domains. Interacts with unc-49.

The protein localises to the cell membrane. It is found in the synapse. Its function is as follows. Probable neuronal cell surface protein thought to be involved in cell-cell-interactions by forming intercellular junctions through binding to beta-neurexins. Plays a role in the clustering of the GABA(A) receptor unc-49 at postsynaptic sites in neuromuscular junctions (NMJs) via the interaction with madd-4 and neurexin nrx-1 and is thereby required for normal GABAergic synaptic transmission. This is Neuroligin-1 (nlg-1) from Caenorhabditis elegans.